The sequence spans 1248 residues: Reverse gyrase 1 (1248 aa).

The segment at 7–44 (IPPSIYLFSCPNCGRSISTYRLLLGSVCNICLEEDKEY) adopts an RG N-terminal-type zinc-finger fold. Zn(2+)-binding residues include Cys16, Cys19, Cys34, and Cys37. ATP is bound by residues Gln92 and 109–116 (APPGLGKT). The Helicase ATP-binding domain maps to 96–262 (IYRLLSGESF…KKYRENTQKN (167 aa)). The DEAD box motif lies at 219 to 222 (DDVD). The topoisomerase I stretch occupies residues 621-1248 (QKVKTVLLVV…QVYEEINEIR (628 aa)). A Toprim domain is found at 625–789 (TVLLVVESPN…NIRRAEFHEV (165 aa)). Residue Glu631 participates in Mg(2+) binding. The RG C-terminal-type; atypical zinc finger occupies 706-735 (IKKCENNHQFTDFFESNKCPRCMTTKVRYD). Zn(2+) is bound by residues Cys709, His713, Cys724, and Cys727. Asp758 is a binding site for Mg(2+). Residues 805–1248 (NVNLVKSQLV…QVYEEINEIR (444 aa)) enclose the Topo IA-type catalytic domain. Tyr965 acts as the O-(5'-phospho-DNA)-tyrosine intermediate in catalysis.

The protein in the N-terminal section; belongs to the DEAD box helicase family. DDVD subfamily. This sequence in the C-terminal section; belongs to the type IA topoisomerase family. As to quaternary structure, monomer. Requires Zn(2+) as cofactor. Mg(2+) is required as a cofactor. In terms of processing, the N-terminus is blocked.

The protein resides in the cytoplasm. It carries out the reaction ATP + H2O = ADP + phosphate + H(+). Functionally, modifies the topological state of DNA by introducing positive supercoils in an ATP-dependent process. Increases the linking number in steps of +1. Has a DNA-stimulated ATPase activity; closed circular ssDNA stimulates ATPase much better than dsDNA although negative supercoiled, positive supercoiled and relaxed dsDNA all stimulate ATPase activity. All NTPs permit topoisomerization (relaxation) of negatively supercoiled dsDNA without nucleotide hydrolysis. It transiently cleaves a single DNA strand and remains covalently bound to the 5' DNA end. Acts via a tyrosine residue. Reverse gyrase binds and unwinds DNA independently of ATP binding and DNA cleavage. May be involved in rewinding the DNA strands in the regions of the chromosome that have opened up to allow transcription or replication, probably acts via ssDNA regions of the chromosome. In Sulfolobus acidocaldarius (strain ATCC 33909 / DSM 639 / JCM 8929 / NBRC 15157 / NCIMB 11770), this protein is Reverse gyrase 1.